The following is a 428-amino-acid chain: uncharacterized protein (428 aa).

Residue histidine 68 participates in Zn(2+) binding. Glutamate 71 functions as the Proton acceptor in the catalytic mechanism. Histidine 72 and glutamate 143 together coordinate Zn(2+).

This sequence belongs to the peptidase M16 family. Requires Zn(2+) as cofactor.

This is an uncharacterized protein from Bacillus subtilis (strain 168).